Consider the following 411-residue polypeptide: ATPase GET3B (411 aa).

A chloroplast-targeting transit peptide spans 1-67 (MATLSSYLLS…RRRNSLQVKS (67 aa)). ATP is bound at residue 95–102 (KGGVGKTS). Asp-124 is an active-site residue. Asn-348 is an ATP binding site.

This sequence belongs to the arsA ATPase family.

The protein localises to the plastid. Its subcellular location is the chloroplast stroma. It catalyses the reaction ATP + H2O = ADP + phosphate + H(+). The chain is ATPase GET3B from Arabidopsis thaliana (Mouse-ear cress).